We begin with the raw amino-acid sequence, 184 residues long: Lipoprotein signal peptidase (184 aa).

Helical transmembrane passes span 23–43, 88–108, and 110–130; these read FLYY…FQVF, PGLV…FLVF, and TSYN…GNFF. Active-site residues include Asp-142 and Asp-157. A helical transmembrane segment spans residues 156-176; that stretch reads ADCCITFSFIGLFLSFLIQFF.

The protein belongs to the peptidase A8 family.

Its subcellular location is the cell membrane. It carries out the reaction Release of signal peptides from bacterial membrane prolipoproteins. Hydrolyzes -Xaa-Yaa-Zaa-|-(S,diacylglyceryl)Cys-, in which Xaa is hydrophobic (preferably Leu), and Yaa (Ala or Ser) and Zaa (Gly or Ala) have small, neutral side chains.. Its pathway is protein modification; lipoprotein biosynthesis (signal peptide cleavage). This protein specifically catalyzes the removal of signal peptides from prolipoproteins. The protein is Lipoprotein signal peptidase of Mycoplasma pneumoniae (strain ATCC 29342 / M129 / Subtype 1) (Mycoplasmoides pneumoniae).